Here is a 296-residue protein sequence, read N- to C-terminus: GTP-binding protein GEM (296 aa).

Disordered regions lie at residues 1 to 20 (MTLNNVTMRQGTVGMQPQQQ) and 37 to 68 (PHQYSHRNRHSATPEDHCRRSWSSDSTDSVIS). The segment covering 57 to 68 (SWSSDSTDSVIS) has biased composition (low complexity). GTP is bound by residues 82–89 (GEQGVGKS) and 191–194 (NKSD). Positions 266–285 (ARRFWGKIVAKNNKNMAFKL) are calmodulin-binding.

This sequence belongs to the small GTPase superfamily. RGK family. In terms of assembly, interacts with calmodulin in a Ca(2+)-dependent manner. Binds ROCK1. Phosphorylated on tyrosine residues. As to expression, most abundant in thymus, spleen, kidney, lung, and testis. Less abundant in heart, brain, liver and skeletal muscle.

It localises to the cell membrane. Could be a regulatory protein, possibly participating in receptor-mediated signal transduction at the plasma membrane. Has guanine nucleotide-binding activity but undetectable intrinsic GTPase activity. The sequence is that of GTP-binding protein GEM (GEM) from Homo sapiens (Human).